Reading from the N-terminus, the 332-residue chain is Ribosomal RNA small subunit methyltransferase H (332 aa).

S-adenosyl-L-methionine contacts are provided by residues 39–41 (GGY), aspartate 56, phenylalanine 83, aspartate 100, and glutamine 107.

The protein belongs to the methyltransferase superfamily. RsmH family.

The protein resides in the cytoplasm. The catalysed reaction is cytidine(1402) in 16S rRNA + S-adenosyl-L-methionine = N(4)-methylcytidine(1402) in 16S rRNA + S-adenosyl-L-homocysteine + H(+). Specifically methylates the N4 position of cytidine in position 1402 (C1402) of 16S rRNA. The polypeptide is Ribosomal RNA small subunit methyltransferase H (Bartonella quintana (strain Toulouse) (Rochalimaea quintana)).